The following is a 189-amino-acid chain: dCTP deaminase, dUMP-forming (189 aa).

DCTP-binding positions include 101–106, aspartate 119, 127–129, glutamine 148, tyrosine 162, lysine 170, and glutamine 174; these read KSSLGR and TLE. The Proton donor/acceptor role is filled by glutamate 129. Residues 163–189 are disordered; sequence GSGKLGSKYQGQRGPTPSKAYLNFPNK.

It belongs to the dCTP deaminase family. Homotrimer.

The catalysed reaction is dCTP + 2 H2O = dUMP + NH4(+) + diphosphate. The protein operates within pyrimidine metabolism; dUMP biosynthesis; dUMP from dCTP: step 1/1. Functionally, bifunctional enzyme that catalyzes both the deamination of dCTP to dUTP and the hydrolysis of dUTP to dUMP without releasing the toxic dUTP intermediate. This chain is dCTP deaminase, dUMP-forming, found in Corynebacterium glutamicum (strain R).